The chain runs to 430 residues: Adenylosuccinate synthetase (430 aa).

Residues 12 to 18 (GDEGKGK) and 40 to 42 (GHT) contribute to the GTP site. Residue Asp13 is the Proton acceptor of the active site. The Mg(2+) site is built by Asp13 and Gly40. Residues 13–16 (DEGK), 38–41 (NAGH), Thr128, Arg142, Gln223, Thr238, and Arg302 contribute to the IMP site. The Proton donor role is filled by His41. 298 to 304 (TTTGRPR) lines the substrate pocket. GTP is bound by residues Arg304, 330–332 (SID), and 412–414 (SVG).

This sequence belongs to the adenylosuccinate synthetase family. In terms of assembly, homodimer. The cofactor is Mg(2+).

It is found in the cytoplasm. It carries out the reaction IMP + L-aspartate + GTP = N(6)-(1,2-dicarboxyethyl)-AMP + GDP + phosphate + 2 H(+). Its pathway is purine metabolism; AMP biosynthesis via de novo pathway; AMP from IMP: step 1/2. Functionally, plays an important role in the de novo pathway of purine nucleotide biosynthesis. Catalyzes the first committed step in the biosynthesis of AMP from IMP. In Streptococcus uberis (strain ATCC BAA-854 / 0140J), this protein is Adenylosuccinate synthetase.